Consider the following 201-residue polypeptide: ATP synthase subunit delta, chloroplastic (201 aa).

The protein belongs to the ATPase delta chain family. F-type ATPases have 2 components, F(1) - the catalytic core - and F(0) - the membrane proton channel. F(1) has five subunits: alpha(3), beta(3), gamma(1), delta(1), epsilon(1). CF(0) has four main subunits: a(1), b(1), b'(1) and c(10-14). The alpha and beta chains form an alternating ring which encloses part of the gamma chain. F(1) is attached to F(0) by a central stalk formed by the gamma and epsilon chains, while a peripheral stalk is formed by the delta, b and b' chains.

The protein resides in the plastid. It localises to the chloroplast thylakoid membrane. Its function is as follows. F(1)F(0) ATP synthase produces ATP from ADP in the presence of a proton or sodium gradient. F-type ATPases consist of two structural domains, F(1) containing the extramembraneous catalytic core and F(0) containing the membrane proton channel, linked together by a central stalk and a peripheral stalk. During catalysis, ATP synthesis in the catalytic domain of F(1) is coupled via a rotary mechanism of the central stalk subunits to proton translocation. Functionally, this protein is part of the stalk that links CF(0) to CF(1). It either transmits conformational changes from CF(0) to CF(1) or is implicated in proton conduction. The protein is ATP synthase subunit delta, chloroplastic of Vaucheria litorea (Yellow-green alga).